A 434-amino-acid polypeptide reads, in one-letter code: Alpha-enolase (434 aa).

Serine 40 is a binding site for Mg(2+). Substrate contacts are provided by histidine 158 and glutamate 167. Catalysis depends on glutamate 210, which acts as the Proton donor. The Mg(2+) site is built by aspartate 245, glutamate 293, and aspartate 318. Substrate contacts are provided by glutamate 293 and aspartate 318. The Proton acceptor role is filled by lysine 343. Residues 370–373 (SHRS) and lysine 394 each bind substrate.

The protein belongs to the enolase family. Homodimer. It depends on Mg(2+) as a cofactor.

Its subcellular location is the cytoplasm. The enzyme catalyses (2R)-2-phosphoglycerate = phosphoenolpyruvate + H2O. It participates in carbohydrate degradation; glycolysis; pyruvate from D-glyceraldehyde 3-phosphate: step 4/5. The protein is Alpha-enolase of Sceloporus undulatus (Eastern fence lizard).